The following is a 444-amino-acid chain: MIVHPIDYRYGTPEMKRIWSEDSKIKRMVRVEMALLRALAKKGYLSEEEAKEAKKKAYSVTPERVKEIEAEIKHDIMALVKAITEATGCRWVHFGATSNDIIDTATALQLRDSLKILEVKIKRLAKVLADKALEYKDVVCLGRTHGQAALPTTYGFRFALWAAEVARHYIRLQQMKDRLLVGQMSGAVGTQAAFGKDGFEIEEEVMRLLNLKPALISSQIIPRDSYCEYLEFLANLAATLEKIALNFRLLQRAEVGELMEKFEAKQVGSSTMPHKRNPIDCENVCGLARVVRGFVEPQHQSAILWEERDLTNSSAERITLVESTVLADHILTKMIKVVSSVSLNLENIRRNLEMQRGLNLSEAVMIEMTKRGVGRQEAHEILRQAAMRAYENNSSLLDELLKDERVMKYFKEDELREILKPENYLGTARERVERVVRWVNEVLK.

N(6)-(1,2-dicarboxyethyl)-AMP is bound by residues 9–10, 73–75, and 97–98; these read RY, KHD, and TS. His-145 functions as the Proton donor/acceptor in the catalytic mechanism. Gln-219 is a N(6)-(1,2-dicarboxyethyl)-AMP binding site. Ser-269 (proton donor/acceptor) is an active-site residue. Residues Ser-270, 275-277, Asn-283, and 314-318 contribute to the N(6)-(1,2-dicarboxyethyl)-AMP site; these read KRN and SAERI.

This sequence belongs to the lyase 1 family. Adenylosuccinate lyase subfamily. Homotetramer. Residues from neighboring subunits contribute catalytic and substrate-binding residues to each active site.

The enzyme catalyses N(6)-(1,2-dicarboxyethyl)-AMP = fumarate + AMP. It catalyses the reaction (2S)-2-[5-amino-1-(5-phospho-beta-D-ribosyl)imidazole-4-carboxamido]succinate = 5-amino-1-(5-phospho-beta-D-ribosyl)imidazole-4-carboxamide + fumarate. The protein operates within purine metabolism; AMP biosynthesis via de novo pathway; AMP from IMP: step 2/2. It functions in the pathway purine metabolism; IMP biosynthesis via de novo pathway; 5-amino-1-(5-phospho-D-ribosyl)imidazole-4-carboxamide from 5-amino-1-(5-phospho-D-ribosyl)imidazole-4-carboxylate: step 2/2. Catalyzes two reactions in de novo purine nucleotide biosynthesis. Catalyzes the breakdown of 5-aminoimidazole- (N-succinylocarboxamide) ribotide (SAICAR or 2-[5-amino-1-(5-phospho-beta-D-ribosyl)imidazole-4-carboxamido]succinate) to 5-aminoimidazole-4-carboxamide ribotide (AICAR or 5-amino-1-(5-phospho-beta-D-ribosyl)imidazole-4-carboxamide) and fumarate, and of adenylosuccinate (ADS or N(6)-(1,2-dicarboxyethyl)-AMP) to adenosine monophosphate (AMP) and fumarate. This chain is Adenylosuccinate lyase (purB), found in Archaeoglobus fulgidus (strain ATCC 49558 / DSM 4304 / JCM 9628 / NBRC 100126 / VC-16).